Here is an 874-residue protein sequence, read N- to C-terminus: Valine--tRNA ligase (874 aa).

A 'HIGH' region motif is present at residues 51–61 (PNVTGVLHIGH). Positions 533–537 (KMSKS) match the 'KMSKS' region motif. Residue Lys536 coordinates ATP. A coiled-coil region spans residues 813–873 (LVARLKKQLE…IKQELDLLEQ (61 aa)).

It belongs to the class-I aminoacyl-tRNA synthetase family. ValS type 1 subfamily. In terms of assembly, monomer.

Its subcellular location is the cytoplasm. The catalysed reaction is tRNA(Val) + L-valine + ATP = L-valyl-tRNA(Val) + AMP + diphosphate. Functionally, catalyzes the attachment of valine to tRNA(Val). As ValRS can inadvertently accommodate and process structurally similar amino acids such as threonine, to avoid such errors, it has a 'posttransfer' editing activity that hydrolyzes mischarged Thr-tRNA(Val) in a tRNA-dependent manner. This is Valine--tRNA ligase from Helicobacter pylori (strain ATCC 700392 / 26695) (Campylobacter pylori).